The following is a 152-amino-acid chain: Protein-export protein SecB (152 aa).

The protein belongs to the SecB family. In terms of assembly, homotetramer, a dimer of dimers. One homotetramer interacts with 1 SecA dimer.

It is found in the cytoplasm. One of the proteins required for the normal export of preproteins out of the cell cytoplasm. It is a molecular chaperone that binds to a subset of precursor proteins, maintaining them in a translocation-competent state. It also specifically binds to its receptor SecA. In Verminephrobacter eiseniae (strain EF01-2), this protein is Protein-export protein SecB.